We begin with the raw amino-acid sequence, 347 residues long: Fe(2+) transport protein 1 (347 aa).

The signal sequence occupies residues Met1–Ala22. At Ile23–Lys52 the chain is on the extracellular side. A helical membrane pass occupies residues Val53 to Ser73. The Cytoplasmic portion of the chain corresponds to Arg74 to Asn84. Residues Ile85–Val105 form a helical membrane-spanning segment. At Leu106–Lys125 the chain is on the extracellular side. Residues Phe126–Met146 form a helical membrane-spanning segment. Topologically, residues Ala147–Arg192 are cytoplasmic. Residues Lys154 and Lys179 each participate in a glycyl lysine isopeptide (Lys-Gly) (interchain with G-Cter in ubiquitin) cross-link. The helical transmembrane segment at Val193–Leu213 threads the bilayer. The Extracellular segment spans residues Gly214–Gly224. Residues Leu225–Leu245 form a helical membrane-spanning segment. The Cytoplasmic portion of the chain corresponds to Gln246–Lys254. A helical transmembrane segment spans residues Phe255–Leu275. The Extracellular portion of the chain corresponds to Ser276–Ala286. Residues Leu287–Val307 traverse the membrane as a helical segment. Residues Asp308 to Gln326 are Cytoplasmic-facing. The chain crosses the membrane as a helical span at residues Phe327 to Ala347.

The protein belongs to the ZIP transporter (TC 2.A.5) family. In terms of assembly, interacts with FREE1. Monoubiquitinated on several Lys residues. Monoubiquitination controls trafficking from the plasma membrane and targeting to the vacuole. In terms of tissue distribution, expressed in the external cell layers of the root including the lateral branching zone. Also detected in flowers before pollination.

It is found in the cell membrane. The protein resides in the early endosome. Its subcellular location is the golgi apparatus. It localises to the trans-Golgi network. The protein localises to the vacuole. Its function is as follows. High-affinity iron transporter that plays a key role in the uptake of iron from the rhizosphere across the plasma membrane in the root epidermal layer. Acts as the principal regulator of iron homeostasis in planta. Also mediates the heavy metals uptake under iron-deficiency by its ability to transport cobalt, cadmium, manganese and/or zinc ions. This is Fe(2+) transport protein 1 (IRT1) from Arabidopsis thaliana (Mouse-ear cress).